The primary structure comprises 619 residues: Guanylate cyclase soluble subunit beta-1 (619 aa).

His-105 is a heme binding site. Residues 421-554 (TILFSGIVGF…NTVNLTSRTE (134 aa)) form the Guanylate cyclase domain.

It belongs to the adenylyl cyclase class-4/guanylyl cyclase family. As to quaternary structure, the active enzyme is formed by a heterodimer of an alpha and a beta subunit. Heterodimer with GUCY1A1. Can also form inactive homodimers in vitro. The cofactor is heme. As to expression, lung and brain.

It is found in the cytoplasm. The catalysed reaction is GTP = 3',5'-cyclic GMP + diphosphate. Activated by nitric oxide in the presence of magnesium or manganese ions, binding of NO to the heme iron increases catalytic activity up to 400 folds. Mediates responses to nitric oxide (NO) by catalyzing the biosynthesis of the signaling molecule cGMP. This Bos taurus (Bovine) protein is Guanylate cyclase soluble subunit beta-1 (GUCY1B1).